Consider the following 146-residue polypeptide: Flagellar assembly factor FliW (146 aa).

Belongs to the FliW family. Interacts with translational regulator CsrA and flagellin(s).

It is found in the cytoplasm. Its function is as follows. Acts as an anti-CsrA protein, binds CsrA and prevents it from repressing translation of its target genes, one of which is flagellin. Binds to flagellin and participates in the assembly of the flagellum. The protein is Flagellar assembly factor FliW of Azoarcus sp. (strain BH72).